The sequence spans 86 residues: Omega-theraphotoxin-Hhn1f 4 (86 aa).

A signal peptide spans 1–21; that stretch reads MKSIVFVALFGLALLAVVCSA. A propeptide spanning residues 22-50 is cleaved from the precursor; it reads SEDAHKELLKEVVRAMVVDKTDAVQAGER. 3 disulfides stabilise this stretch: Cys-52–Cys-66, Cys-59–Cys-71, and Cys-65–Cys-78.

Belongs to the neurotoxin 10 (Hwtx-1) family. 17 (Hntx-9) subfamily. In terms of tissue distribution, expressed by the venom gland.

It is found in the secreted. In terms of biological role, ion channel inhibitor. The chain is Omega-theraphotoxin-Hhn1f 4 from Cyriopagopus hainanus (Chinese bird spider).